The chain runs to 382 residues: Dual-specificity RNA methyltransferase RlmN (382 aa).

The Proton acceptor role is filled by Glu96. Positions 102–342 constitute a Radical SAM core domain; sequence QGKRGTLCVS…VRTTRGEDID (241 aa). Cys109 and Cys345 are oxidised to a cystine. The [4Fe-4S] cluster site is built by Cys116, Cys120, and Cys123. S-adenosyl-L-methionine is bound by residues 170 to 171, Ser202, 224 to 226, and Asn302; these read GE and SLH. Residue Cys345 is the S-methylcysteine intermediate of the active site.

This sequence belongs to the radical SAM superfamily. RlmN family. [4Fe-4S] cluster is required as a cofactor.

The protein resides in the cytoplasm. The enzyme catalyses adenosine(2503) in 23S rRNA + 2 reduced [2Fe-2S]-[ferredoxin] + 2 S-adenosyl-L-methionine = 2-methyladenosine(2503) in 23S rRNA + 5'-deoxyadenosine + L-methionine + 2 oxidized [2Fe-2S]-[ferredoxin] + S-adenosyl-L-homocysteine. It carries out the reaction adenosine(37) in tRNA + 2 reduced [2Fe-2S]-[ferredoxin] + 2 S-adenosyl-L-methionine = 2-methyladenosine(37) in tRNA + 5'-deoxyadenosine + L-methionine + 2 oxidized [2Fe-2S]-[ferredoxin] + S-adenosyl-L-homocysteine. Its function is as follows. Specifically methylates position 2 of adenine 2503 in 23S rRNA and position 2 of adenine 37 in tRNAs. m2A2503 modification seems to play a crucial role in the proofreading step occurring at the peptidyl transferase center and thus would serve to optimize ribosomal fidelity. The sequence is that of Dual-specificity RNA methyltransferase RlmN from Pseudomonas syringae pv. tomato (strain ATCC BAA-871 / DC3000).